The chain runs to 78 residues: Conotoxin 1 (78 aa).

Residues 1-22 (MKLTCMMFVAVLFLTASVFITA) form the signal peptide. Positions 23 to 51 (DDSRNGIENLPRMRRHEMKNPKASKLNKR) are excised as a propeptide. Position 52 is a pyrrolidone carboxylic acid (Q52). Disulfide bonds link C53–C69, C60–C73, and C68–C77.

The protein belongs to the conotoxin O1 superfamily. Expressed by the venom duct.

It localises to the secreted. This is Conotoxin 1 from Conus imperialis (Imperial cone).